The sequence spans 113 residues: Hydrogenase maturation factor HybF (113 aa).

Residues H2 and E3 each contribute to the Ni(2+) site. Zn(2+)-binding residues include C73, C76, C89, and C92.

Belongs to the HypA/HybF family. HybF subfamily.

Functionally, involved in the maturation of [NiFe] hydrogenases. Required for nickel insertion into the metal center of the hydrogenase. This chain is Hydrogenase maturation factor HybF, found in Klebsiella pneumoniae.